Consider the following 543-residue polypeptide: MLRGIEIRGKVDKNVKSILTEECLTFLGELERRFGGIRKNLLQKRLDRQIDINNGILPSFLKDSDCKRATDKNWKCSSVPLEIQDRRVEITGPTDRKMVINALNSGAKVFMADFEDANCPNWENSIHGQQNMIDANNRTISFTSAEGRKYELNKQVAVLFVRPRGWHLNEDHLAIDGLSMSGSLFDFGCYIFHNHQILKNRNSNPYFYLPKMESHLEARLWNDVFVFSQNYLGMPIGTIKATVLIETILASFEMDEILYELRDHSAGLNCGRWDYIFSFIKKFQSYPDKMLPDRAKVTMTSPFMDSYVKLLIYTCHKRGVHAMGGMAAQIPIKNNEQANNAAMEKVRLDKQREVRAGHDGTWVAHPALIPIAMEQFNTHMKSQNQISYIPSSTAPNFEEIAKSLLSVDPVKPGDITEDGFRSNIVVGILYLEAWLNGNGCVPIHNLMEDAATAEISRSQIWQWIKHKAPLPDGKSFVTLQYYNRIFKEESDKLEKAHPNSKTLTDAIQIFNNLIVSPNFIDFLTPSCYKFVVDSERKTFSPKL.

Residue R162 is the Proton acceptor of the active site. D449 functions as the Proton donor in the catalytic mechanism.

The protein belongs to the malate synthase family.

The enzyme catalyses glyoxylate + acetyl-CoA + H2O = (S)-malate + CoA + H(+). The protein operates within carbohydrate metabolism; glyoxylate cycle; (S)-malate from isocitrate: step 2/2. This is Malate synthase (masA) from Dictyostelium discoideum (Social amoeba).